A 479-amino-acid chain; its full sequence is Lysosomal protective protein (479 aa).

Positions 1–27 are cleaved as a signal peptide; that stretch reads MFRAALWPPVLLLLQLLLLACAPGGEG. Disulfide bonds link Cys87–Cys361, Cys239–Cys255, Cys240–Cys245, and Cys280–Cys330. N-linked (GlcNAc...) asparagine glycosylation occurs at Asn144. The active site involves Ser177. The N-linked (GlcNAc...) asparagine glycan is linked to Asn332. Active-site residues include Asp399 and His456.

The protein belongs to the peptidase S10 family. In terms of assembly, heterodimer of a 32 kDa chain and a 20 kDa chain; disulfide-linked.

It is found in the lysosome. It catalyses the reaction Release of a C-terminal amino acid with broad specificity.. In terms of biological role, protective protein appears to be essential for both the activity of beta-galactosidase and neuraminidase, it associates with these enzymes and exerts a protective function necessary for their stability and activity. This protein is also a carboxypeptidase and can deamidate tachykinins. The chain is Lysosomal protective protein (CTSA) from Bos taurus (Bovine).